Reading from the N-terminus, the 431-residue chain is Enolase (431 aa).

Gln167 is a binding site for (2R)-2-phosphoglycerate. The active-site Proton donor is Glu209. Mg(2+)-binding residues include Asp246, Glu289, and Asp316. Residues Lys341, Arg370, Ser371, and Lys392 each contribute to the (2R)-2-phosphoglycerate site. The active-site Proton acceptor is the Lys341.

The protein belongs to the enolase family. Component of the RNA degradosome, a multiprotein complex involved in RNA processing and mRNA degradation. Mg(2+) serves as cofactor.

The protein resides in the cytoplasm. It localises to the secreted. Its subcellular location is the cell surface. The catalysed reaction is (2R)-2-phosphoglycerate = phosphoenolpyruvate + H2O. It functions in the pathway carbohydrate degradation; glycolysis; pyruvate from D-glyceraldehyde 3-phosphate: step 4/5. In terms of biological role, catalyzes the reversible conversion of 2-phosphoglycerate (2-PG) into phosphoenolpyruvate (PEP). It is essential for the degradation of carbohydrates via glycolysis. The polypeptide is Enolase (Shewanella pealeana (strain ATCC 700345 / ANG-SQ1)).